Reading from the N-terminus, the 249-residue chain is MPSVEVLRFEPLLEGVLQRRWKRFLSEVELAGGELVTAHCANTGPMTGVLHPGGRVRVRHDPSPKRKLAYTWEQAEMPGDGGWVGVNTALPNRLLRATIEAGLLEPWLGPIAGVRAEVTYGRERRSRIDLLLQPAPEADDQRPIYVEIKNTTWSAADLALFPDTVTERGQKHLEELMHVLPDARAVLIPCVSRSDVKRFAPGDSADPRYGELFRQAIDAGVEVVPCQFSFAADAVRFEGVLPVQRTESG.

Belongs to the SfsA family.

The sequence is that of Sugar fermentation stimulation protein homolog from Synechococcus sp. (strain RCC307).